Here is a 358-residue protein sequence, read N- to C-terminus: Peroxisome biogenesis protein 3-1 (358 aa).

The chain crosses the membrane as a helical span at residues 15 to 32 (ILVTTTCLGSGYLLYKLY). Residues 33 to 62 (NAHTRKLADLERELANERENDEIIKTQMKA) are a coiled coil.

The protein belongs to the peroxin-3 family.

The protein localises to the peroxisome membrane. Involved in morphology determination of peroxisomes, but not in import of peroxisomal matrix proteins. May act as a docking factor for PEX19 and be necessary for the import of peroxisomal membrane proteins in the peroxisomes. The chain is Peroxisome biogenesis protein 3-1 (PEX3-1) from Arabidopsis thaliana (Mouse-ear cress).